Consider the following 395-residue polypeptide: Chalcone synthase (395 aa).

Cysteine 164 is an active-site residue.

Belongs to the thiolase-like superfamily. Chalcone/stilbene synthases family.

It catalyses the reaction (E)-4-coumaroyl-CoA + 3 malonyl-CoA + 3 H(+) = 2',4,4',6'-tetrahydroxychalcone + 3 CO2 + 4 CoA. Its pathway is secondary metabolite biosynthesis; flavonoid biosynthesis. Functionally, the primary product of this enzyme is 4,2',4',6'-tetrahydroxychalcone (also termed naringenin-chalcone or chalcone) which can under specific conditions spontaneously isomerize into naringenin. The sequence is that of Chalcone synthase (CHS) from Betula pendula (European white birch).